We begin with the raw amino-acid sequence, 356 residues long: Isocitrate dehydrogenase [NAD] subunit 1, mitochondrial (356 aa).

The substrate site is built by arginine 106, arginine 137, and aspartate 224. Aspartate 224 contributes to the Mg(2+) binding site.

This sequence belongs to the isocitrate and isopropylmalate dehydrogenases family. As to quaternary structure, octamer of two non-identical subunits IDH1 and IDH2. Mg(2+) is required as a cofactor. Mn(2+) serves as cofactor.

The protein resides in the mitochondrion. It catalyses the reaction D-threo-isocitrate + NAD(+) = 2-oxoglutarate + CO2 + NADH. In terms of biological role, performs an essential role in the oxidative function of the citric acid cycle. Also binds RNA; specifically to the 5'-untranslated leaders of mitochondrial mRNAs. The polypeptide is Isocitrate dehydrogenase [NAD] subunit 1, mitochondrial (idh1) (Schizosaccharomyces pombe (strain 972 / ATCC 24843) (Fission yeast)).